The primary structure comprises 546 residues: ATP synthase subunit alpha (546 aa).

ATP is bound at residue 172 to 179 (GDRKTGKT). Composition is skewed to polar residues over residues 511 to 520 (FRTTEGNNLG) and 536 to 546 (TELNVSRKTAK). Positions 511–546 (FRTTEGNNLGTEAPVDPLAADDVNKTELNVSRKTAK) are disordered.

It belongs to the ATPase alpha/beta chains family. As to quaternary structure, F-type ATPases have 2 components, CF(1) - the catalytic core - and CF(0) - the membrane proton channel. CF(1) has five subunits: alpha(3), beta(3), gamma(1), delta(1), epsilon(1). CF(0) has three main subunits: a(1), b(2) and c(9-12). The alpha and beta chains form an alternating ring which encloses part of the gamma chain. CF(1) is attached to CF(0) by a central stalk formed by the gamma and epsilon chains, while a peripheral stalk is formed by the delta and b chains.

Its subcellular location is the cell membrane. The catalysed reaction is ATP + H2O + 4 H(+)(in) = ADP + phosphate + 5 H(+)(out). Functionally, produces ATP from ADP in the presence of a proton gradient across the membrane. The alpha chain is a regulatory subunit. The chain is ATP synthase subunit alpha from Corynebacterium aurimucosum (strain ATCC 700975 / DSM 44827 / CIP 107346 / CN-1) (Corynebacterium nigricans).